Here is a 229-residue protein sequence, read N- to C-terminus: Small ribosomal subunit protein uS3 (229 aa).

Positions 39-107 (IRKFLKKELY…EVFINIKEEK (69 aa)) constitute a KH type-2 domain.

This sequence belongs to the universal ribosomal protein uS3 family. Part of the 30S ribosomal subunit. Forms a tight complex with proteins S10 and S14.

Binds the lower part of the 30S subunit head. Binds mRNA in the 70S ribosome, positioning it for translation. The protein is Small ribosomal subunit protein uS3 of Nitratiruptor sp. (strain SB155-2).